The following is a 115-amino-acid chain: Large ribosomal subunit protein bL20 (115 aa).

It belongs to the bacterial ribosomal protein bL20 family.

Binds directly to 23S ribosomal RNA and is necessary for the in vitro assembly process of the 50S ribosomal subunit. It is not involved in the protein synthesizing functions of that subunit. This Synechococcus sp. (strain CC9902) protein is Large ribosomal subunit protein bL20.